The following is a 230-amino-acid chain: 2,3-bisphosphoglycerate-dependent phosphoglycerate mutase (230 aa).

Substrate-binding positions include 8-15 (RHGESEWN), 21-22 (TG), Arg-60, 87-90 (ERHY), Lys-98, 114-115 (RR), and 183-184 (GN). The Tele-phosphohistidine intermediate role is filled by His-9. Catalysis depends on Glu-87, which acts as the Proton donor/acceptor.

Belongs to the phosphoglycerate mutase family. BPG-dependent PGAM subfamily.

The enzyme catalyses (2R)-2-phosphoglycerate = (2R)-3-phosphoglycerate. Its pathway is carbohydrate degradation; glycolysis; pyruvate from D-glyceraldehyde 3-phosphate: step 3/5. Functionally, catalyzes the interconversion of 2-phosphoglycerate and 3-phosphoglycerate. In Streptococcus pneumoniae (strain ATCC BAA-255 / R6), this protein is 2,3-bisphosphoglycerate-dependent phosphoglycerate mutase.